A 212-amino-acid polypeptide reads, in one-letter code: 3,4-dihydroxy-2-butanone 4-phosphate synthase (212 aa).

Residues 37–38 (RE), Asp-42, 150–154 (RRGHT), and Glu-174 each bind D-ribulose 5-phosphate. Glu-38 provides a ligand contact to Mg(2+). His-153 contributes to the Mg(2+) binding site.

The protein belongs to the DHBP synthase family. Homodimer. It depends on Mg(2+) as a cofactor. Mn(2+) serves as cofactor.

It carries out the reaction D-ribulose 5-phosphate = (2S)-2-hydroxy-3-oxobutyl phosphate + formate + H(+). The protein operates within cofactor biosynthesis; riboflavin biosynthesis; 2-hydroxy-3-oxobutyl phosphate from D-ribulose 5-phosphate: step 1/1. In terms of biological role, catalyzes the conversion of D-ribulose 5-phosphate to formate and 3,4-dihydroxy-2-butanone 4-phosphate. This chain is 3,4-dihydroxy-2-butanone 4-phosphate synthase, found in Shewanella piezotolerans (strain WP3 / JCM 13877).